We begin with the raw amino-acid sequence, 833 residues long: DNA helicase MCM8 (833 aa).

Residues 395 to 602 (LLKLVVNSLC…QHDHLLSEHV (208 aa)) enclose the MCM domain. Position 447–454 (447–454 (GDPGLGKS)) interacts with ATP. Ser-623 carries the post-translational modification Phosphoserine.

This sequence belongs to the MCM family. Component of the MCM8-MCM9 complex, which forms a hexamer composed of MCM8 and MCM9. Interacts with the DNA mismatch repair (MMR) complex composed at least of MSH2, MSH3, MSH6, PMS1 and MLH1. Interacts with RAD51; the interaction recruits RAD51 to DNA damage sites. Interacts with the MRN complex composed of MRE11, RAD50 and NBN/NBS1. Interacts with CDC6 and ORC2. Interacts with HROB; the interaction recruits the MCM8-MCM9 complex to DNA damage sites.

Its subcellular location is the nucleus. The protein resides in the chromosome. The catalysed reaction is ATP + H2O = ADP + phosphate + H(+). Its function is as follows. Component of the MCM8-MCM9 complex, a complex involved in the repair of double-stranded DNA breaks (DBSs) and DNA interstrand cross-links (ICLs) by homologous recombination (HR). Required for DNA resection by the MRE11-RAD50-NBN/NBS1 (MRN) complex by recruiting the MRN complex to the repair site and by promoting the complex nuclease activity. Probably by regulating the localization of the MNR complex, indirectly regulates the recruitment of downstream effector RAD51 to DNA damage sites including DBSs and ICLs. The MCM8-MCM9 complex is dispensable for DNA replication and S phase progression. However, may play a non-essential for DNA replication: may be involved in the activation of the prereplicative complex (pre-RC) during G(1) phase by recruiting CDC6 to the origin recognition complex (ORC). Probably by regulating HR, plays a key role during gametogenesis. Stabilizes MCM9 protein. The sequence is that of DNA helicase MCM8 (Mcm8) from Mus musculus (Mouse).